The primary structure comprises 162 residues: Phosphopantetheine adenylyltransferase (162 aa).

Thr9 is a binding site for substrate. ATP contacts are provided by residues 9–10 (TF) and His17. Substrate is bound by residues Lys41, Leu77, and Arg91. Residues 92–94 (GLR), Glu102, and 127–133 (RQAIASK) each bind ATP.

The protein belongs to the bacterial CoaD family. As to quaternary structure, homohexamer. Requires Mg(2+) as cofactor.

Its subcellular location is the cytoplasm. It catalyses the reaction (R)-4'-phosphopantetheine + ATP + H(+) = 3'-dephospho-CoA + diphosphate. It functions in the pathway cofactor biosynthesis; coenzyme A biosynthesis; CoA from (R)-pantothenate: step 4/5. In terms of biological role, reversibly transfers an adenylyl group from ATP to 4'-phosphopantetheine, yielding dephospho-CoA (dPCoA) and pyrophosphate. In Cereibacter sphaeroides (strain ATCC 17029 / ATH 2.4.9) (Rhodobacter sphaeroides), this protein is Phosphopantetheine adenylyltransferase.